Here is a 328-residue protein sequence, read N- to C-terminus: uncharacterized protein (328 aa).

Residues 296-328 (APEGDLEDEIIEVDPEQPRDDPYRRLRTPPPGG) are disordered. Acidic residues predominate over residues 299–310 (GDLEDEIIEVDP).

Functionally, possibly necessary for replication. This is an uncharacterized protein from Halobacterium sp. (strain GN101).